A 1062-amino-acid polypeptide reads, in one-letter code: Cell division control protein 7 (1062 aa).

Residues 9-259 (ITLGDCLGKG…TRKLLKHPWV (251 aa)) enclose the Protein kinase domain. Residues 15 to 23 (LGKGAFGAV) and Lys38 each bind ATP. The active-site Proton acceptor is the Asp131. Polar residues-rich tracts occupy residues 296-310 (NRIN…QSSY) and 376-394 (AFNS…SPLS). Disordered stretches follow at residues 296–331 (NRIN…NWDN), 361–394 (NNSS…SPLS), and 1038–1062 (NEHK…PLTQ).

This sequence belongs to the protein kinase superfamily. Ser/Thr protein kinase family. CDC7 subfamily. In terms of assembly, interacts with spg1. Seems to interact with cdc11. Mg(2+) is required as a cofactor.

It catalyses the reaction L-seryl-[protein] + ATP = O-phospho-L-seryl-[protein] + ADP + H(+). The enzyme catalyses L-threonyl-[protein] + ATP = O-phospho-L-threonyl-[protein] + ADP + H(+). Functionally, protein kinase essential for cell division. Plays a key role in initiation of septum formation and cytokinesis. This chain is Cell division control protein 7 (cdc7), found in Schizosaccharomyces pombe (strain 972 / ATCC 24843) (Fission yeast).